The sequence spans 968 residues: MDSTLTAREIRERFINYFKRNEHTYVHSSATIPLDDPTLLFANAGMNQFKPIFLNTVDPSHPMAKLSRAANTQKCIRAGGKHNDLDDVGKDVYHHTFFEMLGSWSFGDYFKELACKMALELLTQEFGIPVERLYVTYFGGDEAAGLEPDLECRQIWQNLGLDEAKILPGNMKDNFWEMGDTGPCGPCSEIHYDRIGGRDAAHLVNQDDPNVLEIWNLVFIQYNRESDGVLKPLPKKSIDTGMGLERLVSVLQNKMSNYDTDLFVPYFEAIQKGTGARPYTGKVGAEDTDGIDMAYRVLADHARTITVALADGGRPDNTGRGYVLRRILRRAVRYSHEKLNASRGFFATLVDVVVQSLGDAFPELKKDPDMVKDIINEEEVQFLKTLSRGRRILDRKIQSLGDCQTIPGDTAWLLYDTYGFPVDLTGLIAEEKGLVVDMDGFEEERKLAQLKSQGKGAGGEDLIMLDIYAIEELRAKGLEATDDSPKYNYHSDSSGSYVFECTVATVLALRREKMFVDEVVTGQECGVVLDKTCFYAEQGGQIFDEGYLVKVDDSSEDKTEFTVKNAQVRGGYVLHIGTIYGNLRVGDQVRLFIDEPRRRPVMSNHTATHILNFALRSVLGDADQKGSLVAPDRLRFDFTAKGAMSTEQIKKTEEIVNGMIEAAKPVYTLDCPLAAAKAIQGLRAVFDETYPDPVRVVSIGVPVSELLDDPSGPAGSLTSVEFCGGTHLRNSSHAGAFVIVTEEAIAKGIRRIVAVTGAEAQKALRKSETLKKSLSAMEVKVKAQSAPNKDVQKEIADLGEVLATAVIPQWQKDEQRETLKSLKKVMDDLDRASKADVQKRVLEKTKQLIDSNPNQPLVILEMESGASAKALNEALKLFKTHSPQTSAMLFTVDNEAGKITCLCQVPQNAANRGLKASEWVQQVSGLMDGKGGGKDMSAQATGKNVGCLQEALQLATSFAQLRLGDVKN.

Residue Met1 is modified to N-acetylmethionine. Phosphoserine is present on Ser3. An N6-acetyllysine modification is found at Lys19. ATP is bound by residues Arg77, His95, Trp176, and 214–216; that span reads IWN. Residues Asn216 and Asp239 each contribute to the L-alanine site. Residue Gly243 participates in ATP binding. Ser399 and Ser555 each carry phosphoserine. Zn(2+) is bound by residues His605, His609, Cys723, and His727. Residues 750–763 carry the Nuclear localization signal motif; that stretch reads RRIVAVTGAEAQKA. N6-acetyllysine is present on Lys876. Lys943 bears the N6,N6,N6-trimethyllysine; alternate mark. N6,N6-dimethyllysine; alternate is present on Lys943. Lys943 is subject to N6-methyllysine; alternate.

Belongs to the class-II aminoacyl-tRNA synthetase family. Monomer. Interacts with ANKRD16; the interaction is direct. It depends on Zn(2+) as a cofactor. Post-translationally, ISGylated. Methylation at 'Lys-943' by METTL21C.

Its subcellular location is the cytoplasm. It is found in the nucleus. The catalysed reaction is tRNA(Ala) + L-alanine + ATP = L-alanyl-tRNA(Ala) + AMP + diphosphate. The enzyme catalyses (S)-lactate + ATP + H(+) = (S)-lactoyl-AMP + diphosphate. It catalyses the reaction (S)-lactoyl-AMP + L-lysyl-[protein] = N(6)-[(S)-lactoyl]-L-lysyl-[protein] + AMP + 2 H(+). Its activity is regulated as follows. The protein lactyltransferase activity is inhibited by beta-alanine. Its function is as follows. Catalyzes the attachment of alanine to tRNA(Ala) in a two-step reaction: alanine is first activated by ATP to form Ala-AMP and then transferred to the acceptor end of tRNA(Ala). Also edits incorrectly charged tRNA(Ala) via its editing domain. In presence of high levels of lactate, also acts as a protein lactyltransferase that mediates lactylation of lysine residues in target proteins, such as TEAD1, TP53/p53 and YAP1. Protein lactylation takes place in a two-step reaction: lactate is first activated by ATP to form lactate-AMP and then transferred to lysine residues of target proteins. Acts as an inhibitor of TP53/p53 activity by catalyzing lactylation of TP53/p53. Acts as a positive regulator of the Hippo pathway by mediating lactylation of TEAD1 and YAP1. This Rattus norvegicus (Rat) protein is Alanine--tRNA ligase, cytoplasmic (Aars1).